We begin with the raw amino-acid sequence, 391 residues long: S-adenosylmethionine synthase (391 aa).

His19 contacts ATP. Asp21 lines the Mg(2+) pocket. K(+) is bound at residue Glu47. Positions 60 and 103 each coordinate L-methionine. A flexible loop region spans residues Gln103–Arg113. ATP-binding positions include Asp168–Lys170, Arg236–Phe237, Asp245, Arg251–Lys252, Ala268, and Lys272. L-methionine is bound at residue Asp245. Residue Lys276 participates in L-methionine binding.

The protein belongs to the AdoMet synthase family. Homotetramer; dimer of dimers. Mg(2+) serves as cofactor. It depends on K(+) as a cofactor.

The protein resides in the cytoplasm. It catalyses the reaction L-methionine + ATP + H2O = S-adenosyl-L-methionine + phosphate + diphosphate. It functions in the pathway amino-acid biosynthesis; S-adenosyl-L-methionine biosynthesis; S-adenosyl-L-methionine from L-methionine: step 1/1. Its function is as follows. Catalyzes the formation of S-adenosylmethionine (AdoMet) from methionine and ATP. The overall synthetic reaction is composed of two sequential steps, AdoMet formation and the subsequent tripolyphosphate hydrolysis which occurs prior to release of AdoMet from the enzyme. The chain is S-adenosylmethionine synthase from Oleidesulfovibrio alaskensis (strain ATCC BAA-1058 / DSM 17464 / G20) (Desulfovibrio alaskensis).